We begin with the raw amino-acid sequence, 259 residues long: Phosphate import ATP-binding protein PstB (259 aa).

Residues Ser-6–Ile-254 form the ABC transporter domain. Gly-45–Ser-52 contacts ATP.

Belongs to the ABC transporter superfamily. Phosphate importer (TC 3.A.1.7) family. The complex is composed of two ATP-binding proteins (PstB), two transmembrane proteins (PstC and PstA) and a solute-binding protein (PstS).

The protein resides in the cell membrane. The enzyme catalyses phosphate(out) + ATP + H2O = ADP + 2 phosphate(in) + H(+). Part of the ABC transporter complex PstSACB involved in phosphate import. Responsible for energy coupling to the transport system. This chain is Phosphate import ATP-binding protein PstB, found in Desulfitobacterium hafniense (strain Y51).